The chain runs to 177 residues: MSRIAKAPVDVLSGVEVTIAGQEVTVKGKNGTLSRVFNDAVEVVQEENQLKASPREGVANGWAQAGTARSLLDAMVIGVSQGFEKKLQLNGVGYRAAAQGKKLNLTLGFSHPVAYEMPEGISVETPSQTEIVVKGADKQLVGQVAANIRGYRPPEPYKGKGVRYADEVVRRKEAKKK.

This sequence belongs to the universal ribosomal protein uL6 family. Part of the 50S ribosomal subunit.

Its function is as follows. This protein binds to the 23S rRNA, and is important in its secondary structure. It is located near the subunit interface in the base of the L7/L12 stalk, and near the tRNA binding site of the peptidyltransferase center. The sequence is that of Large ribosomal subunit protein uL6 from Pseudoalteromonas atlantica (strain T6c / ATCC BAA-1087).